The primary structure comprises 294 residues: 33 kDa chaperonin (294 aa).

2 cysteine pairs are disulfide-bonded: cysteine 238/cysteine 240 and cysteine 271/cysteine 274.

Belongs to the HSP33 family. In terms of processing, under oxidizing conditions two disulfide bonds are formed involving the reactive cysteines. Under reducing conditions zinc is bound to the reactive cysteines and the protein is inactive.

The protein resides in the cytoplasm. In terms of biological role, redox regulated molecular chaperone. Protects both thermally unfolding and oxidatively damaged proteins from irreversible aggregation. Plays an important role in the bacterial defense system toward oxidative stress. This Staphylococcus carnosus (strain TM300) protein is 33 kDa chaperonin.